The chain runs to 334 residues: Glycosylinositol phosphorylceramide mannosyl transferase 1 (334 aa).

The Cytoplasmic portion of the chain corresponds to 1 to 26; the sequence is MGGGEVSKEMGACSLAYRRGDQKLRK. The chain crosses the membrane as a helical; Signal-anchor for type II membrane protein span at residues 27 to 49; it reads FVTARSTKFLLFCCIAFVLVTIV. Over 50 to 334 the chain is Lumenal; the sequence is CRSSRPWVNS…AVDSRNLWFW (285 aa). N-linked (GlcNAc...) asparagine glycosylation is present at asparagine 58. Residues 145–150, 166–168, arginine 196, and 258–262 each bind substrate; these read DSLNNR, DDD, and RNCED. Aspartate 168 serves as a coordination point for Mn(2+). A disulfide bridge connects residues cysteine 260 and cysteine 305. The active site involves aspartate 262. Asparagine 271 is a glycosylation site (N-linked (GlcNAc...) asparagine). Substrate-binding positions include 289–302 and 292–302; these read STGI…TEKR and ISSIGGHTEKR.

Belongs to the glycosyltransferase 64 family. Requires Mn(2+) as cofactor. As to expression, expressed in leaves, roots, stem, and flowers.

It is found in the golgi apparatus membrane. It functions in the pathway protein modification; protein glycosylation. Its pathway is sphingolipid metabolism. In terms of biological role, mannosyl transferase (ManT) required for the biosynthesis of mannose-carrying glycosylinositol phosphorylceramides (GIPCs). Maybe involved in cell-cell adhesion that maintains the integrity of organs by providing mechanical strength and facilitating the movement of metabolites throughout the plant during development. Prevents abscisic acid- (ABA-) mediated effects on development (e.g. cell size, flowering time, senescence). Probably implicated in beta-(1,4)-galactan biosynthesis thus being a cell-wall synthesis-related (CWSR) protein. The chain is Glycosylinositol phosphorylceramide mannosyl transferase 1 from Arabidopsis thaliana (Mouse-ear cress).